The chain runs to 383 residues: 8-amino-7-oxononanoate synthase (383 aa).

Substrate is bound at residue Arg-21. 108–109 (GY) serves as a coordination point for pyridoxal 5'-phosphate. His-133 serves as a coordination point for substrate. Pyridoxal 5'-phosphate-binding residues include Ser-179, His-207, and Thr-233. Residue Lys-236 is modified to N6-(pyridoxal phosphate)lysine. Position 350 (Thr-350) interacts with substrate.

The protein belongs to the class-II pyridoxal-phosphate-dependent aminotransferase family. BioF subfamily. In terms of assembly, homodimer. Requires pyridoxal 5'-phosphate as cofactor.

It catalyses the reaction 6-carboxyhexanoyl-[ACP] + L-alanine + H(+) = (8S)-8-amino-7-oxononanoate + holo-[ACP] + CO2. It participates in cofactor biosynthesis; biotin biosynthesis. Functionally, catalyzes the decarboxylative condensation of pimeloyl-[acyl-carrier protein] and L-alanine to produce 8-amino-7-oxononanoate (AON), [acyl-carrier protein], and carbon dioxide. The polypeptide is 8-amino-7-oxononanoate synthase (Photorhabdus laumondii subsp. laumondii (strain DSM 15139 / CIP 105565 / TT01) (Photorhabdus luminescens subsp. laumondii)).